The chain runs to 409 residues: Menaquinone reductase (409 aa).

FAD is bound by residues 11–15 (GAGPA), 44–47 (CGDG), arginine 101, valine 125, aspartate 288, and 300–301 (GI).

The protein belongs to the geranylgeranyl reductase family. It depends on FAD as a cofactor.

It carries out the reaction menaquinone-9 + AH2 = beta-dihydromenaquinone-9 + A. Its pathway is quinol/quinone metabolism; menaquinone biosynthesis. In terms of biological role, catalyzes the reduction of a single double bond in the isoprenoid tail of menaquinone (MK-9) in M.smegmatis, likely the beta-isoprene unit, forming the predominant form of menaquinone found in mycobacteria, MK-9(II-H2). This chain is Menaquinone reductase, found in Mycolicibacterium smegmatis (strain ATCC 700084 / mc(2)155) (Mycobacterium smegmatis).